The sequence spans 420 residues: Hemocyanin 2-c chain (420 aa).

A compositionally biased stretch (basic residues) spans aspartate 1 to valine 12. The disordered stretch occupies residues aspartate 1 to glutamine 20. Histidine 46 contacts Cu cation. An intrachain disulfide couples cysteine 52 to cysteine 63. The Cu cation site is built by histidine 66, histidine 73, histidine 185, histidine 189, and histidine 216. Intrachain disulfides connect cysteine 175/cysteine 242 and cysteine 335/cysteine 342.

In terms of processing, O-glycosylated. As to expression, hemolymph.

The protein localises to the secreted. Its subcellular location is the extracellular space. Its function is as follows. Hemocyanins are copper-containing oxygen carriers occurring freely dissolved in the hemolymph of many mollusks and arthropods. The sequence is that of Hemocyanin 2-c chain from Megathura crenulata (Giant keyhole limpet).